A 786-amino-acid chain; its full sequence is Probable aminopeptidase 1 (786 aa).

Substrate contacts are provided by residues E103 and 235–239; that span reads GAMEN. Residue H270 participates in Zn(2+) binding. The active-site Proton acceptor is E271. The Zn(2+) site is built by H274 and E293.

Belongs to the peptidase M1 family. It depends on Zn(2+) as a cofactor.

Its subcellular location is the cytoplasm. In Sulfurisphaera tokodaii (strain DSM 16993 / JCM 10545 / NBRC 100140 / 7) (Sulfolobus tokodaii), this protein is Probable aminopeptidase 1 (ape1).